The following is a 359-amino-acid chain: Phosphate acyltransferase (359 aa).

Belongs to the PlsX family. Homodimer. Probably interacts with PlsY.

It is found in the cytoplasm. The enzyme catalyses a fatty acyl-[ACP] + phosphate = an acyl phosphate + holo-[ACP]. It functions in the pathway lipid metabolism; phospholipid metabolism. In terms of biological role, catalyzes the reversible formation of acyl-phosphate (acyl-PO(4)) from acyl-[acyl-carrier-protein] (acyl-ACP). This enzyme utilizes acyl-ACP as fatty acyl donor, but not acyl-CoA. This chain is Phosphate acyltransferase, found in Koribacter versatilis (strain Ellin345).